The chain runs to 222 residues: Large ribosomal subunit protein bL25 (222 aa).

The protein belongs to the bacterial ribosomal protein bL25 family. CTC subfamily. In terms of assembly, part of the 50S ribosomal subunit; part of the 5S rRNA/L5/L18/L25 subcomplex. Contacts the 5S rRNA. Binds to the 5S rRNA independently of L5 and L18.

Its function is as follows. This is one of the proteins that binds to the 5S RNA in the ribosome where it forms part of the central protuberance. The polypeptide is Large ribosomal subunit protein bL25 (Ruthia magnifica subsp. Calyptogena magnifica).